The following is a 346-amino-acid chain: MSENKTSLSYKDAGVDIDAGNQLVERIKSVTKKTHRPEVKGNLGGFGALCELPTKYKKPLLVSGTDGVGTKLRVAMDANRHDGVGIDLVAMCVNDLIVQGAEPLFFLDYYATGKLDVDVAASVVTGIGAGCEQAGCALIGGETAEMPGMYHDGDYDIAGFCVGVVEADNVIDGTNVKPGQKLIALGSSGPHSNGYSLVRKIIEVSGADVNAELNGKPIIDQLLEPTRIYVKSVLALLEEVQVSAISHITGGGFWENIPRVLPEDAKVVIDEKSWEWPAVFSWLQENGNVTRHEMYRTFNCGVGLVIVVDDADTEQAVNILKQHGENAWVIGDIASKDGEEQVEINA.

The protein belongs to the AIR synthase family.

Its subcellular location is the cytoplasm. The catalysed reaction is 2-formamido-N(1)-(5-O-phospho-beta-D-ribosyl)acetamidine + ATP = 5-amino-1-(5-phospho-beta-D-ribosyl)imidazole + ADP + phosphate + H(+). It participates in purine metabolism; IMP biosynthesis via de novo pathway; 5-amino-1-(5-phospho-D-ribosyl)imidazole from N(2)-formyl-N(1)-(5-phospho-D-ribosyl)glycinamide: step 2/2. This chain is Phosphoribosylformylglycinamidine cyclo-ligase, found in Alteromonas mediterranea (strain DSM 17117 / CIP 110805 / LMG 28347 / Deep ecotype).